An 871-amino-acid chain; its full sequence is CRISPR system Cmr subunit Cmr2 (871 aa).

Residues 1–215 (MVNIKEKLFV…THLDLTSALS (215 aa)) are not required for target RNA cleavage. Residues His-13, Asp-14, and His-25 each coordinate Mn(2+). Residues Cys-448, Cys-451, Cys-478, and Cys-481 each coordinate Zn(2+). The GGDEF domain occupies 592 to 752 (KYYAILVMDG…GKDTLAIGLL (161 aa)). Residues Asp-600, Glu-656, Asp-673, Asp-674, Glu-694, and Glu-700 each contribute to the Mn(2+) site.

Belongs to the CRISPR system Cmr2 family. Part of the type III-B Cmr ribonucleoprotein (RNP) complex, an elongated RNP with Cmr2 and Cmr3 as the base, with Cmr4 and Cmr5 forming a helical core along the mature crRNA (39 or 45 nt in length), while the complex is capped by Cmr6 and Cmr1. The 5' end of the crRNA is bound to Cmr2 and Cmr3, while Cmr6 and a Cmr1 subunit (Cmr1-1 or Cmr1-2) cap the 3' end of the crRNA. The target RNA lies antiparallel to the crRNA, with its 5' end near Cmr1 and Cmr6 and its 3' end near Cmr2 and Cmr3; major target cleavage occurs nears the junction of Cmr1/Cmr6 and Cmr4/Cmr, with minor cleavage occurring at 6 nt intervals which coincide with the proposed spacing of Cmr4 subunits. Forms a 1:1 complex with Cmr3. The Cmr2-Cmr3 complex non-specifically binds ss-target RNA and crRNA. Interacts with Cmr3, Cmr4 and Cmr5. Requires Ca(2+) as cofactor. It depends on Mn(2+) as a cofactor. Zn(2+) serves as cofactor.

It localises to the cytoplasm. CRISPR (clustered regularly interspaced short palindromic repeat), is an adaptive immune system that provides protection against mobile genetic elements (viruses, transposable elements and conjugative plasmids). CRISPR clusters contain sequences complementary to antecedent mobile elements and target invading nucleic acids. CRISPR clusters are transcribed and processed into CRISPR RNA (crRNA), formerly called psiRNA (prokaryotic silencing) in this organism. Part of the Cmr ribonucleoprotein complex which has divalent cation-dependent endoribonuclease activity specific for ssRNA complementary to the crRNA (target RNA), generating 5' hydroxy- and 3' phosphate or 2'-3' cyclic phosphate termini. Cmr4 is probably the subunit that cleaves target RNA. Cmr complex does not cleave ssDNA complementary to the crRNA. Cleavage of target RNA is guided by the crRNA; substrate cleavage occurs a fixed distance (14 nt) from the 3' end of the crRNA. In vitro reconstitution shows Cmr1-2 and Cmr5 are not absolutely necessary for target cleavage. This is CRISPR system Cmr subunit Cmr2 from Pyrococcus furiosus (strain ATCC 43587 / DSM 3638 / JCM 8422 / Vc1).